The chain runs to 269 residues: Putative phosphoenolpyruvate synthase regulatory protein (269 aa).

ADP is bound at residue 149–156 (GVSRSGKT).

The protein belongs to the pyruvate, phosphate/water dikinase regulatory protein family. PSRP subfamily.

The enzyme catalyses [pyruvate, water dikinase] + ADP = [pyruvate, water dikinase]-phosphate + AMP + H(+). It carries out the reaction [pyruvate, water dikinase]-phosphate + phosphate + H(+) = [pyruvate, water dikinase] + diphosphate. Functionally, bifunctional serine/threonine kinase and phosphorylase involved in the regulation of the phosphoenolpyruvate synthase (PEPS) by catalyzing its phosphorylation/dephosphorylation. The polypeptide is Putative phosphoenolpyruvate synthase regulatory protein (Pseudoalteromonas translucida (strain TAC 125)).